A 701-amino-acid chain; its full sequence is F-box/LRR-repeat protein 17 (701 aa).

3 disordered regions span residues 73–93 (SAGLEEEPPLSPPPPPPRDGA), 227–250 (GGGGPAGGGASPPRPPDAGCCQAP), and 279–321 (VRAG…IPDI). Over residues 81–90 (PLSPPPPPPR) the composition is skewed to pro residues. Over residues 227 to 236 (GGGGPAGGGA) the composition is skewed to gly residues. The span at 285–294 (APSSAQQQPE) shows a compositional bias: polar residues. An F-box domain is found at 318-365 (IPDINQLPPSILLKIFSNLSLNERCLSASLVCKYWRDLCLDFQFWKQL).

It belongs to the FBXL17 family. As to quaternary structure, part of the SCF (SKP1-CUL1-F-box) E3 ubiquitin-protein ligase complex SCF(FBXL17) composed of CUL1, SKP1, RBX1 and FBXL17. Interacts with BTB domain-containing proteins such as KLHL12, BCL6 and BACH1; specifically recognizes and binds a conserved degron of non-consecutive residues present at the interface of BTB dimers of aberrant composition. Interacts with SUFU. Interacts with PRMT1.

The protein resides in the cytoplasm. The protein localises to the nucleus. Its function is as follows. Substrate-recognition component of the SCF(FBXL17) E3 ubiquitin ligase complex, a key component of a quality control pathway required to ensure functional dimerization of BTB domain-containing proteins (dimerization quality control, DQC). FBXL17 specifically recognizes and binds a conserved degron of non-consecutive residues present at the interface of BTB dimers of aberrant composition: aberrant BTB dimer are then ubiquitinated by the SCF(FBXL17) complex and degraded by the proteasome. The ability of the SCF(FBXL17) complex to eliminate compromised BTB dimers is required for the differentiation and survival of neural crest and neuronal cells. The SCF(FBXL17) complex mediates ubiquitination and degradation of BACH1. The SCF(FBXL17) complex is also involved in the regulation of the hedgehog/smoothened (Hh) signaling pathway by mediating the ubiquitination and degradation of SUFU, allowing the release of GLI1 from SUFU for proper Hh signal transduction. The SCF(FBXL17) complex mediates ubiquitination and degradation of PRMT1. This Mus musculus (Mouse) protein is F-box/LRR-repeat protein 17.